The chain runs to 146 residues: Single-stranded DNA-binding protein 1-A, mitochondrial (146 aa).

The N-terminal 17 residues, 1–17, are a transit peptide targeting the mitochondrion; the sequence is MFHRPALQVFRQFARCQ. The 113-residue stretch at 28–140 folds into the SSB domain; that stretch reads INKVQLLGRV…IIADNIIFLS (113 aa).

Homotetramer.

It is found in the mitochondrion. The protein resides in the mitochondrion matrix. It localises to the mitochondrion nucleoid. Binds preferentially and cooperatively to pyrimidine rich single-stranded DNA (ss-DNA). Required to maintain the copy number of mitochondrial DNA (mtDNA) and plays crucial roles during mtDNA replication that stimulate activity of the DNA polymerase at the replication fork. May also function in mtDNA repair. The polypeptide is Single-stranded DNA-binding protein 1-A, mitochondrial (ssbp1-a) (Xenopus laevis (African clawed frog)).